The sequence spans 148 residues: Endoribonuclease YbeY (148 aa).

His-113, His-117, and His-123 together coordinate Zn(2+).

This sequence belongs to the endoribonuclease YbeY family. The cofactor is Zn(2+).

The protein resides in the cytoplasm. Functionally, single strand-specific metallo-endoribonuclease involved in late-stage 70S ribosome quality control and in maturation of the 3' terminus of the 16S rRNA. This is Endoribonuclease YbeY from Borrelia duttonii (strain Ly).